The following is a 284-amino-acid chain: NAD kinase (284 aa).

Asp-61 serves as the catalytic Proton acceptor. Residues 61 to 62 (DG), Arg-66, 136 to 137 (ND), Arg-147, Lys-164, Asp-166, and Leu-201 contribute to the NAD(+) site.

This sequence belongs to the NAD kinase family. The cofactor is a divalent metal cation.

It localises to the cytoplasm. The enzyme catalyses NAD(+) + ATP = ADP + NADP(+) + H(+). Functionally, involved in the regulation of the intracellular balance of NAD and NADP, and is a key enzyme in the biosynthesis of NADP. Catalyzes specifically the phosphorylation on 2'-hydroxyl of the adenosine moiety of NAD to yield NADP. This chain is NAD kinase, found in Dehalococcoides mccartyi (strain CBDB1).